A 170-amino-acid polypeptide reads, in one-letter code: Crossover junction endodeoxyribonuclease RuvC (170 aa).

Residues aspartate 12, glutamate 72, and aspartate 144 contribute to the active site. Aspartate 12, glutamate 72, and aspartate 144 together coordinate Mg(2+).

It belongs to the RuvC family. Homodimer which binds Holliday junction (HJ) DNA. The HJ becomes 2-fold symmetrical on binding to RuvC with unstacked arms; it has a different conformation from HJ DNA in complex with RuvA. In the full resolvosome a probable DNA-RuvA(4)-RuvB(12)-RuvC(2) complex forms which resolves the HJ. Mg(2+) is required as a cofactor.

It localises to the cytoplasm. It carries out the reaction Endonucleolytic cleavage at a junction such as a reciprocal single-stranded crossover between two homologous DNA duplexes (Holliday junction).. Functionally, the RuvA-RuvB-RuvC complex processes Holliday junction (HJ) DNA during genetic recombination and DNA repair. Endonuclease that resolves HJ intermediates. Cleaves cruciform DNA by making single-stranded nicks across the HJ at symmetrical positions within the homologous arms, yielding a 5'-phosphate and a 3'-hydroxyl group; requires a central core of homology in the junction. The consensus cleavage sequence is 5'-(A/T)TT(C/G)-3'. Cleavage occurs on the 3'-side of the TT dinucleotide at the point of strand exchange. HJ branch migration catalyzed by RuvA-RuvB allows RuvC to scan DNA until it finds its consensus sequence, where it cleaves and resolves the cruciform DNA. This Nitrobacter hamburgensis (strain DSM 10229 / NCIMB 13809 / X14) protein is Crossover junction endodeoxyribonuclease RuvC.